The chain runs to 136 residues: Sec-independent protein translocase protein TatB (136 aa).

A helical membrane pass occupies residues Met-1 to Gly-21. The interval Ala-66–Glu-136 is disordered. 2 stretches are compositionally biased toward basic and acidic residues: residues Glu-77–Ala-89 and Tyr-96–Leu-107. Over residues Asp-108 to Pro-130 the composition is skewed to polar residues.

Belongs to the TatB family. As to quaternary structure, the Tat system comprises two distinct complexes: a TatABC complex, containing multiple copies of TatA, TatB and TatC subunits, and a separate TatA complex, containing only TatA subunits. Substrates initially bind to the TatABC complex, which probably triggers association of the separate TatA complex to form the active translocon.

The protein localises to the cell inner membrane. Its function is as follows. Part of the twin-arginine translocation (Tat) system that transports large folded proteins containing a characteristic twin-arginine motif in their signal peptide across membranes. Together with TatC, TatB is part of a receptor directly interacting with Tat signal peptides. TatB may form an oligomeric binding site that transiently accommodates folded Tat precursor proteins before their translocation. The sequence is that of Sec-independent protein translocase protein TatB from Psychromonas ingrahamii (strain DSM 17664 / CCUG 51855 / 37).